The sequence spans 180 residues: Large ribosomal subunit protein uL5 (180 aa).

It belongs to the universal ribosomal protein uL5 family. In terms of assembly, part of the 50S ribosomal subunit; part of the 5S rRNA/L5/L18/L25 subcomplex. Contacts the 5S rRNA and the P site tRNA. Forms a bridge to the 30S subunit in the 70S ribosome.

Its function is as follows. This is one of the proteins that bind and probably mediate the attachment of the 5S RNA into the large ribosomal subunit, where it forms part of the central protuberance. In the 70S ribosome it contacts protein S13 of the 30S subunit (bridge B1b), connecting the 2 subunits; this bridge is implicated in subunit movement. Contacts the P site tRNA; the 5S rRNA and some of its associated proteins might help stabilize positioning of ribosome-bound tRNAs. This chain is Large ribosomal subunit protein uL5, found in Acholeplasma laidlawii (strain PG-8A).